The sequence spans 493 residues: Dipeptide permease D (493 aa).

13 helical membrane-spanning segments follow: residues 14–34 (VVAL…LLIL), 49–69 (ALFS…GYLA), 91–111 (LVLG…AIIV), 138–158 (GGFS…PIAC), 167–187 (WAMG…IFLC), 212–232 (NWGW…VLFW), 235–255 (WAVY…GKIY), 267–287 (LGLI…AQQG), 312–332 (MFQS…AWLI), 344–364 (IWGK…ILTL), 379–399 (LMIA…PVAM), 413–433 (VLTG…AGVI), and 458–478 (VFSE…LIWL).

The protein belongs to the major facilitator superfamily. Proton-dependent oligopeptide transporter (POT/PTR) (TC 2.A.17) family. DtpD subfamily.

It localises to the cell inner membrane. Its function is as follows. Probable proton-dependent permease that transports dipeptides. The polypeptide is Dipeptide permease D (Citrobacter rodentium (strain ICC168) (Citrobacter freundii biotype 4280)).